The following is an 895-amino-acid chain: Alanine--tRNA ligase (895 aa).

Zn(2+)-binding residues include histidine 586, histidine 590, cysteine 690, and histidine 694.

Belongs to the class-II aminoacyl-tRNA synthetase family. It depends on Zn(2+) as a cofactor.

Its subcellular location is the cytoplasm. It catalyses the reaction tRNA(Ala) + L-alanine + ATP = L-alanyl-tRNA(Ala) + AMP + diphosphate. Its function is as follows. Catalyzes the attachment of alanine to tRNA(Ala) in a two-step reaction: alanine is first activated by ATP to form Ala-AMP and then transferred to the acceptor end of tRNA(Ala). Also edits incorrectly charged Ser-tRNA(Ala) and Gly-tRNA(Ala) via its editing domain. This chain is Alanine--tRNA ligase, found in Korarchaeum cryptofilum (strain OPF8).